Reading from the N-terminus, the 1439-residue chain is ABC transporter G family member 14 (1439 aa).

Residues 1 to 17 (MEENSNKFEQELKEIGQ) are compositionally biased toward basic and acidic residues. Positions 1-21 (MEENSNKFEQELKEIGQDRNQ) are disordered. The region spanning 117–370 (FSILNFFKPS…FMSLGFDCEP (254 aa)) is the ABC transporter 1 domain. In terms of domain architecture, ABC transmembrane type-2 1 spans 475 to 700 (LNDKFGLFTK…GSEFDAYRIC (226 aa)). 6 helical membrane-spanning segments follow: residues 479–499 (FGLFTKYLSVLIQAFVYSSVF), 516–536 (ILSAVIFNAFLSVGEMSMTFI), 564–584 (IPFTLLQVFLFSIIAYFMFGL), 589–609 (GKFFIFSFTLVGASLACTALF), 614–634 (YLCPSMYIAQNISNVFIIFML), and 734–754 (IIVYCWWIFFVICNMLAMEYI). Residues 805 to 1049 (FTWQNIRYTV…LTSYFERHGV (245 aa)) form the ABC transporter 2 domain. 841-848 (GSSGAGKT) is a binding site for ATP. In terms of domain architecture, ABC transmembrane type-2 2 spans 1141 to 1366 (YYTYGSFVQS…YNTCQNYTSA (226 aa)). 6 helical membrane-spanning segments follow: residues 1144-1164 (YGSFVQSALCGLIIGFTFWNL), 1175-1195 (IFFIFEALMLGILLIFVVMPQ), 1217-1237 (FAISIVVVELPFIVISGTIFF), 1256-1276 (FYFWFIFVIFLFFCVSFGQAV), 1283-1303 (MFFAMTLIPLLIVFLFLFSGV), and 1413-1433 (VGIIICFFVFNILMVILFVYL).

Belongs to the ABC transporter superfamily. ABCG family. PDR (TC 3.A.1.205) subfamily.

The protein resides in the membrane. This Dictyostelium discoideum (Social amoeba) protein is ABC transporter G family member 14 (abcG14).